The primary structure comprises 97 residues: MASVNRNSEIIKKLKTDKRLLEEINERRESNCLVERSNQVSLLRVQKRHFHGAYKSFTHDQVKKPVPDSDRSSWVKLSLFVHKEKRHFPPKNNAIFG.

The protein belongs to the SPATA45 family.

The polypeptide is Spermatogenesis-associated protein 45 (SPATA45) (Bos taurus (Bovine)).